Reading from the N-terminus, the 1148-residue chain is Protocadherin-19 (1148 aa).

The signal sequence occupies residues 1-21 (MESLLLPVLLLLAILWTQAAA). Cadherin domains are found at residues 22–129 (LINL…APSF), 130–238 (PAAQ…NPVF), 239–346 (SEST…PPVI), 350–453 (SVNS…HPHF), 454–563 (SKPY…TPVI), and 569–672 (INGT…QESM). Residues 22-678 (LINLKYSVEE…QESMGSVNLS (657 aa)) lie on the Extracellular side of the membrane. 4 residues coordinate Ca(2+): Glu31, Glu32, Asp88, and Asp90. Residues Cys93 and Cys99 are joined by a disulfide bond. Ca(2+)-binding residues include Asp121, Asn123, Asp124, Asn125, Glu140, Asp155, Asp157, Glu199, Asp212, Asp230, Ser231, Asn232, Asp233, Asn234, and Glu249. The N-linked (GlcNAc...) asparagine glycan is linked to Asn261. Asp264, Asp266, Asn270, Asp305, Glu307, Asp338, Asn340, Asp341, Asn342, Glu360, Asp375, Asp377, Asn381, Asp412, and Glu414 together coordinate Ca(2+). A glycan (N-linked (GlcNAc...) asparagine) is linked at Asn420. Asp427, Asp445, Glu446, Asn447, Asp448, Asn449, Glu464, Asp479, Asp481, Asn485, Asn522, Glu524, and Asp537 together coordinate Ca(2+). A glycan (N-linked (GlcNAc...) asparagine) is linked at Asn485. An N-linked (GlcNAc...) asparagine glycan is attached at Asn546. Asp555, Val556, Asn557, Asp558, and Asn559 together coordinate Ca(2+). An N-linked (GlcNAc...) asparagine glycan is attached at Asn570. Ca(2+)-binding residues include Asp594, Asp596, Asn600, and Asp646. Residue Asn676 is glycosylated (N-linked (GlcNAc...) asparagine). The chain crosses the membrane as a helical span at residues 679 to 699 (LIFIIALGSIAGILFVTMIFV). The Cytoplasmic segment spans residues 700–1148 (AIKCKRDNKE…GVKRLKDIVL (449 aa)). Disordered stretches follow at residues 901–921 (GNSL…EHDV) and 1100–1148 (NVNN…DIVL). Basic and acidic residues-rich tracts occupy residues 906–921 (DSGH…EHDV), 1109–1123 (SEAE…KVMH), and 1130–1148 (KEGR…DIVL).

In terms of assembly, homodimer; antiparallel. In terms of tissue distribution, moderately expressed in all regions of the brain examined, with lowest levels found in the cerebellum. Moderate expression is also found in ovary, and low expression in all other tissues tested. Also detected in primary skin fibroblast.

The protein resides in the cell membrane. Its function is as follows. Calcium-dependent cell-adhesion protein. In Homo sapiens (Human), this protein is Protocadherin-19 (PCDH19).